We begin with the raw amino-acid sequence, 81 residues long: Cortexin-2 (81 aa).

The chain crosses the membrane as a helical span at residues 29 to 49 (TAFAFVGMLLVFLGLLIVRCF).

This sequence belongs to the cortexin family.

It is found in the membrane. In Danio rerio (Zebrafish), this protein is Cortexin-2 (ctxn2).